The sequence spans 345 residues: uncharacterized protein (345 aa).

Solcar repeat units lie at residues 80–153, 162–246, and 256–339; these read MSFF…MKSR, SDPQ…LKLK, and NLAH…ILNF. Transmembrane regions (helical) follow at residues 83–103, 128–148, 220–240, 262–282, 296–316, and 319–339; these read FEAL…LFPI, GLGS…TTYE, AGYG…FPIW, AISG…FDVV, VFTI…KGIV, and VLWL…ILNF.

Belongs to the mitochondrial carrier (TC 2.A.29) family.

It localises to the mitochondrion inner membrane. This is an uncharacterized protein from Schizosaccharomyces pombe (strain 972 / ATCC 24843) (Fission yeast).